A 615-amino-acid chain; its full sequence is Protein translocase subunit SecD (615 aa).

6 helical membrane passes run 10–30, 452–472, 477–497, 504–524, 546–568, and 585–605; these read YIML…NLYG, QGLE…IFFY, LIAT…MSLL, MPGI…NVLI, YAGA…IILY, and GVAT…NLLY.

This sequence belongs to the SecD/SecF family. SecD subfamily. In terms of assembly, forms a complex with SecF. Part of the essential Sec protein translocation apparatus which comprises SecA, SecYEG and auxiliary proteins SecDF-YajC and YidC.

The protein localises to the cell inner membrane. In terms of biological role, part of the Sec protein translocase complex. Interacts with the SecYEG preprotein conducting channel. SecDF uses the proton motive force (PMF) to complete protein translocation after the ATP-dependent function of SecA. This chain is Protein translocase subunit SecD, found in Salmonella choleraesuis (strain SC-B67).